We begin with the raw amino-acid sequence, 1064 residues long: Phosphatidylinositol 4,5-bisphosphate 3-kinase catalytic subunit beta isoform (1064 aa).

Residues 20–109 (SDGAISVDFL…LPVLKLVTRS (90 aa)) form the PI3K-ABD domain. In terms of domain architecture, PI3K-RBD spans 188–279 (GGKLVVAVHF…RTLPHFILVE (92 aa)). Serine 318 carries the phosphoserine modification. A C2 PI3K-type domain is found at 323–490 (NNNPFQITLV…NATALHITFP (168 aa)). The Nuclear localization signal (NLS) motif lies at 404 to 412 (KVKTKKSTK). One can recognise a PIK helical domain in the interval 518 to 695 (ANVSSRGGKK…GVILEAYCRG (178 aa)). Positions 766 to 1047 (YVEKCKYMDS…KFDEALRESW (282 aa)) constitute a PI3K/PI4K catalytic domain. The tract at residues 772–778 (YMDSKMK) is G-loop. Residues 910-918 (GIGDRHSDN) form a catalytic loop region. The interval 929 to 955 (HIDFGHILGNFKSKFGIKRERVPFILT) is activation loop. Serine 1064 is subject to Phosphoserine; by autocatalysis.

This sequence belongs to the PI3/PI4-kinase family. In terms of assembly, heterodimer of a catalytic subunit PIK3CB and a p85 regulatory subunit (PIK3R1, PIK3R2 or PIK3R3). Interaction with PIK3R2 is required for nuclear localization and nuclear export. Part of a complex with PIK3R1 and PTEN. Binding to PTEN may antagonize the lipid kinase activity under normal growth conditions. Part of a complex involved in autophagosome formation composed of PIK3C3 and PIK3R4. Interacts with BECN1, ATG14 and RAB5A. Phosphorylation at Ser-1064 down-regulates lipid kinase activity. In terms of processing, autophosphorylation at Ser-1064 negatively regulates the phosphatidylinositol-4,5-bisphosphate 3-kinase activity.

The protein resides in the cytoplasm. It is found in the nucleus. It catalyses the reaction a 1,2-diacyl-sn-glycero-3-phospho-(1D-myo-inositol-4,5-bisphosphate) + ATP = a 1,2-diacyl-sn-glycero-3-phospho-(1D-myo-inositol-3,4,5-trisphosphate) + ADP + H(+). It carries out the reaction 1-octadecanoyl-2-(5Z,8Z,11Z,14Z)-eicosatetraenoyl-sn-glycero-3-phospho-1D-myo-inositol 4,5-bisphosphate + ATP = 1-octadecanoyl-2-(5Z,8Z,11Z,14Z-eicosatetraenoyl)-sn-glycero-3-phospho-(1D-myo-inositol 3,4,5-triphosphate) + ADP + H(+). The catalysed reaction is L-seryl-[protein] + ATP = O-phospho-L-seryl-[protein] + ADP + H(+). Its pathway is phospholipid metabolism; phosphatidylinositol phosphate biosynthesis. Its function is as follows. Phosphoinositide-3-kinase (PI3K) phosphorylates phosphatidylinositol (PI) derivatives at position 3 of the inositol ring to produce 3-phosphoinositides. Uses ATP and PtdIns(4,5)P2 (phosphatidylinositol 4,5-bisphosphate) to generate phosphatidylinositol 3,4,5-trisphosphate (PIP3). PIP3 plays a key role by recruiting PH domain-containing proteins to the membrane, including AKT1 and PDPK1, activating signaling cascades involved in cell growth, survival, proliferation, motility and morphology. Involved in the activation of AKT1 upon stimulation by G-protein coupled receptors (GPCRs) ligands such as CXCL12, sphingosine 1-phosphate, and lysophosphatidic acid. May also act downstream receptor tyrosine kinases. Required in different signaling pathways for stable platelet adhesion and aggregation. Plays a role in platelet activation signaling triggered by GPCRs, alpha-IIb/beta-3 integrins (ITGA2B/ ITGB3) and ITAM (immunoreceptor tyrosine-based activation motif)-bearing receptors such as GP6. Regulates the strength of adhesion of ITGA2B/ ITGB3 activated receptors necessary for the cellular transmission of contractile forces. Required for platelet aggregation induced by F2 (thrombin) and thromboxane A2 (TXA2). Has a role in cell survival. May have a role in cell migration. Involved in the early stage of autophagosome formation. Modulates the intracellular level of PtdIns3P (phosphatidylinositol 3-phosphate) and activates PIK3C3 kinase activity. May act as a scaffold, independently of its lipid kinase activity to positively regulate autophagy. May have a role in insulin signaling as scaffolding protein in which the lipid kinase activity is not required. May have a kinase-independent function in regulating cell proliferation and in clathrin-mediated endocytosis. Mediator of oncogenic signal in cell lines lacking PTEN. The lipid kinase activity is necessary for its role in oncogenic transformation. Required for the growth of ERBB2 and RAS driven tumors. Also has a protein kinase activity showing autophosphorylation. This Mus musculus (Mouse) protein is Phosphatidylinositol 4,5-bisphosphate 3-kinase catalytic subunit beta isoform (Pik3cb).